The chain runs to 167 residues: uncharacterized protein (167 aa).

This is an uncharacterized protein from Sus scrofa (Pig).